Here is a 128-residue protein sequence, read N- to C-terminus: Large ribosomal subunit protein uL24 (128 aa).

This sequence belongs to the universal ribosomal protein uL24 family. In terms of assembly, part of the 50S ribosomal subunit.

Its function is as follows. One of two assembly initiator proteins, it binds directly to the 5'-end of the 23S rRNA, where it nucleates assembly of the 50S subunit. Functionally, located at the polypeptide exit tunnel on the outside of the subunit. The protein is Large ribosomal subunit protein uL24 of Pyrobaculum calidifontis (strain DSM 21063 / JCM 11548 / VA1).